A 131-amino-acid polypeptide reads, in one-letter code: Agouti-signaling protein (131 aa).

Residues 1–22 form the signal peptide; sequence MDVTRLLLATLVGFLCFFTVHS. The N-linked (GlcNAc...) asparagine glycan is linked to asparagine 39. Residues 58 to 100 are disordered; it reads KSKKISRKEAEKRKRSSKKKASMKKVARPPPPSPCVATRDSCK. Basic residues predominate over residues 70–84; sequence RKRSSKKKASMKKVA. 5 disulfides stabilise this stretch: cysteine 92-cysteine 107, cysteine 99-cysteine 113, cysteine 106-cysteine 124, cysteine 110-cysteine 131, and cysteine 115-cysteine 122. The region spanning 92-131 is the Agouti domain; the sequence is CVATRDSCKPPAPACCDPCASCQCRFFGSACTCRVLNPNC.

In terms of tissue distribution, epithelial cells of the hair follicles and the epidermis.

Its subcellular location is the secreted. In terms of biological role, involved in the regulation of melanogenesis. The binding of ASP to MC1R precludes alpha-MSH initiated signaling and thus blocks production of cAMP, leading to a down-regulation of eumelanogenesis (brown/black pigment) and thus increasing synthesis of pheomelanin (yellow/red pigment). Causes hair follicle melanocytes to synthesize phaeomelanin instead of black or brown pigment eumelanin and produces hairs with a subapical yellow band on an otherwise black or brown background when expressed during the mid-portion of hair growth. The polypeptide is Agouti-signaling protein (Asip) (Mus musculus (Mouse)).